Here is a 161-residue protein sequence, read N- to C-terminus: Regulator of ribonuclease activity A (161 aa).

The protein belongs to the RraA family. In terms of assembly, homotrimer. Binds to both RNA-binding sites in the C-terminal region of Rne and to RhlB.

It localises to the cytoplasm. Its function is as follows. Globally modulates RNA abundance by binding to RNase E (Rne) and regulating its endonucleolytic activity. Can modulate Rne action in a substrate-dependent manner by altering the composition of the degradosome. Modulates RNA-binding and helicase activities of the degradosome. This Tolumonas auensis (strain DSM 9187 / NBRC 110442 / TA 4) protein is Regulator of ribonuclease activity A.